A 163-amino-acid polypeptide reads, in one-letter code: Superoxide dismutase [Mn] (163 aa).

Residues His2, His50, Asp134, and His138 each coordinate Mn(2+).

It belongs to the iron/manganese superoxide dismutase family. It depends on Mn(2+) as a cofactor.

The enzyme catalyses 2 superoxide + 2 H(+) = H2O2 + O2. In terms of biological role, destroys superoxide anion radicals which are normally produced within the cells and which are toxic to biological systems. The polypeptide is Superoxide dismutase [Mn] (sodA) (Mycobacterium kansasii).